We begin with the raw amino-acid sequence, 200 residues long: 2-phospho-L-lactate guanylyltransferase (200 aa).

This sequence belongs to the CofC family. Homodimer.

The catalysed reaction is (2S)-2-phospholactate + GTP + H(+) = (2S)-lactyl-2-diphospho-5'-guanosine + diphosphate. It participates in cofactor biosynthesis; coenzyme F420 biosynthesis. Functionally, guanylyltransferase that catalyzes the activation of (2S)-2-phospholactate (2-PL) as (2S)-lactyl-2-diphospho-5'-guanosine, via the condensation of 2-PL with GTP. It is involved in the biosynthesis of coenzyme F420, a hydride carrier cofactor. The polypeptide is 2-phospho-L-lactate guanylyltransferase (Ferroglobus placidus (strain DSM 10642 / AEDII12DO)).